Reading from the N-terminus, the 297-residue chain is Glutamyl-Q tRNA(Asp) synthetase (297 aa).

L-glutamate-binding positions include 9 to 13 (RFAPS) and E45. The 'HIGH' region signature appears at 12-22 (PSPTGPLHFGS). C101, C103, and C118 together coordinate Zn(2+). 2 residues coordinate L-glutamate: Y170 and R188. Positions 226-230 (KLSKS) match the 'KMSKS' region motif. K229 serves as a coordination point for ATP.

Belongs to the class-I aminoacyl-tRNA synthetase family. GluQ subfamily. Zn(2+) serves as cofactor.

Functionally, catalyzes the tRNA-independent activation of glutamate in presence of ATP and the subsequent transfer of glutamate onto a tRNA(Asp). Glutamate is transferred on the 2-amino-5-(4,5-dihydroxy-2-cyclopenten-1-yl) moiety of the queuosine in the wobble position of the QUC anticodon. This Xanthomonas campestris pv. campestris (strain 8004) protein is Glutamyl-Q tRNA(Asp) synthetase.